We begin with the raw amino-acid sequence, 745 residues long: Junction plakoglobin (745 aa).

Methionine 1 is modified (N-acetylmethionine). The O-linked (GlcNAc) threonine glycan is linked to threonine 14. Phosphoserine occurs at positions 99 and 125. 12 ARM repeats span residues 132-171 (NYQDDAELATRALPELTKLLNDEDPVVVTKAAMIVNQLSK), 172-215 (KEAS…LSHH), 216-255 (REGLLAIFKSGGIPALVRMLSSPVESVLFYAITTLHNLLL), 258-297 (EGAKMAVRLADGLQKMVPLLNKNNPKFLAITTDCLQLLAY), 298-341 (GNQE…LSVC), 342-381 (PSNKPAIVEAGGMQALGKHLTSNSPRLVQNCLWTLRNLSD), 383-420 (ATKQEGLESVLKILVNQLSVDDVNVLTCATGTLSNLTC), 423-464 (SKNK…HLTS), 470-510 (EMAQ…NLAL), 512-551 (PANHAPLQEAAVIPRLVQLLVKAHQDAQRHVAAGTQQPYT), 574-613 (PMNRMEIFRLNTIPLFVQLLYSSVENIQRVAAGVLCELAQ), and 615-661 (KEAA…PDYR). Residues 132 to 297 (NYQDDAELAT…TTDCLQLLAY (166 aa)) form an interaction with DSC1 and DSG1 region. Serine 182 bears the Phosphoserine mark. Residues 574-661 (PMNRMEIFRL…ISEDKNPDYR (88 aa)) are interaction with DSC1. A phosphoserine mark is found at serine 665 and serine 730.

This sequence belongs to the beta-catenin family. As to quaternary structure, homodimer. Component of an E-cadherin/catenin adhesion complex composed of at least E-cadherin/CDH1 and gamma-catenin/JUP, and possibly alpha-catenin/CTNNA1; the complex is located to adherens junctions. The stable association of CTNNA1 is controversial as CTNNA1 was shown not to bind to F-actin when assembled in the complex. Interacts with MUC1. Interacts with CAV1. Interacts with PTPRJ. Interacts with DSG1. Interacts with DSC1 and DSC2. Interacts with PKP2. Interacts with PKP3 (via N-terminus); the interaction is required for PKP3 localization to desmosome cell-cell junctions. Interacts with DSG4. May be phosphorylated by FER. Expressed in the heart (at protein level).

The protein resides in the cell junction. The protein localises to the adherens junction. Its subcellular location is the desmosome. It is found in the cytoplasm. It localises to the cytoskeleton. The protein resides in the cell membrane. The protein localises to the nucleus. Functionally, common junctional plaque protein. The membrane-associated plaques are architectural elements in an important strategic position to influence the arrangement and function of both the cytoskeleton and the cells within the tissue. The presence of plakoglobin in both the desmosomes and in the intermediate junctions suggests that it plays a central role in the structure and function of submembranous plaques. Acts as a substrate for VE-PTP and is required by it to stimulate VE-cadherin function in endothelial cells. Can replace beta-catenin in E-cadherin/catenin adhesion complexes which are proposed to couple cadherins to the actin cytoskeleton. The sequence is that of Junction plakoglobin from Homo sapiens (Human).